Consider the following 241-residue polypeptide: MNKDTIFSAPIEKLGDFTFDESVAEVFPDMIQRSVPGYSNIITAIGMLAQRFVTEGSQVYDLGCSRGAGILSIRRNLQTNQVKIIGVDNSQPMVERCRSHINAYHSDVPVEILCDDIRHIEIKNASMVVLNFTLQFLPRADRLELLTKIYQGLNPNGILVLSEKFTFTNQAMSELLIDLHHTFKRANGYSELEVSQKRTALENVMLTDSIETHKDRLKQAGFSQIELWFQCFNFGSMIAVK.

Residues Y38, G63–S65, D88–N89, D116–I117, N131, and R198 contribute to the S-adenosyl-L-methionine site.

This sequence belongs to the class I-like SAM-binding methyltransferase superfamily. Cx-SAM synthase family. Homodimer.

The catalysed reaction is prephenate + S-adenosyl-L-methionine = carboxy-S-adenosyl-L-methionine + 3-phenylpyruvate + H2O. Functionally, catalyzes the conversion of S-adenosyl-L-methionine (SAM) to carboxy-S-adenosyl-L-methionine (Cx-SAM). This Actinobacillus pleuropneumoniae serotype 7 (strain AP76) protein is Carboxy-S-adenosyl-L-methionine synthase.